We begin with the raw amino-acid sequence, 378 residues long: S-adenosylmethionine:tRNA ribosyltransferase-isomerase (378 aa).

It belongs to the QueA family. As to quaternary structure, monomer.

It is found in the cytoplasm. The enzyme catalyses 7-aminomethyl-7-carbaguanosine(34) in tRNA + S-adenosyl-L-methionine = epoxyqueuosine(34) in tRNA + adenine + L-methionine + 2 H(+). The protein operates within tRNA modification; tRNA-queuosine biosynthesis. In terms of biological role, transfers and isomerizes the ribose moiety from AdoMet to the 7-aminomethyl group of 7-deazaguanine (preQ1-tRNA) to give epoxyqueuosine (oQ-tRNA). This Prochlorococcus marinus (strain MIT 9312) protein is S-adenosylmethionine:tRNA ribosyltransferase-isomerase.